An 809-amino-acid polypeptide reads, in one-letter code: MAAPAVTELEDQEMREAQREYLDFLDDEEDQGIYQSKVRDMISENQYRLIVNVNDLRKKNEKRANMLMNNAFEGLIAFQRALKDFVASIDGTYAKQYEEFYIGLEGSFGNKHVTPRTLTSRCLSCIVCVEGIVTKCSLVRPKVVRSVHYCPATKKTIERKYTDLTSLEAFPSSAVYPTKDEENNPLETEYGLSIYKDHQTITIQEMPEKAPAGQLPRSVDIILDDDLVDKVKPGDRVQVIGTYRCLPSKQNGYTSASFRTILIACNVIQMSKEVTPVFSADDLAKIKKFSKSHSKDIFEQLSRSLAPSIHGHLYIKKAILCMLLGGVEKVLDNGTRIRGDINVLLIGDPSVAKSQLLRYVLCTAPRAIPTTGRGSSGVGLTAAVTTDQETGERRLEAGAMVLADRGVVCIDEFDKMSDMDRTAIHEVMEQGRVTIAKAGIHARLNARCSVLAAANPVYGRYDQYKTPMDNIGLQDSLLSRFDLLFIMLDQMDPEQDREISDHVLRMHRYRAAGEQDGDAMPLGSAVDILATNDPNVTSEEQQELQVYEKHDSLLHGVKKRKEKILSVEFMRKYVHVAKIFKPVLTQEAASFIAEEYSRLRNQDQLSTDVARTSPVTARTLETLIRLSTAHAKVRMSKTVQLQDAEAAIELVQYAYFKKVLEKEKKRRRRDEDSDTEGEQQTQPDGEAKKRRKKRRAQEGESHDPYEFSDTEDETPVVHTPKTPVNGQEEMETDSSAKPGLSGERLKAFKSALLGAFKSAHAQSIAMEALMEAINKRNDSPFSQAEVKAALELMEEANHIMVSDNIVFLI.

The 208-residue stretch at 297–504 (IFEQLSRSLA…QDREISDHVL (208 aa)) folds into the MCM domain. 347-354 (GDPSVAKS) is an ATP binding site. Positions 479–482 (SRFD) match the Arginine finger motif. The tract at residues 664–741 (KKRRRRDEDS…TDSSAKPGLS (78 aa)) is disordered. The segment covering 696–705 (AQEGESHDPY) has biased composition (basic and acidic residues).

It belongs to the MCM family. Component of the mcm2-7 complex (RLF-M). The complex forms a toroidal hexameric ring with the proposed subunit order mcm2-mcm6-mcm4-mcm7-mcm3-mcm5. Component of the CMG helicase complex, composed of the mcm2-7 complex, the GINS complex and cdc45.

The protein localises to the nucleus. It localises to the chromosome. It catalyses the reaction ATP + H2O = ADP + phosphate + H(+). Its function is as follows. Acts as a component of the MCM2-7 complex (MCM complex) which is the putative replicative helicase essential for 'once per cell cycle' DNA replication initiation and elongation in eukaryotic cells. The active ATPase sites in the MCM2-7 ring are formed through the interaction surfaces of two neighboring subunits such that a critical structure of a conserved arginine finger motif is provided in trans relative to the ATP-binding site of the Walker A box of the adjacent subunit. The six ATPase active sites, however, are likely to contribute differentially to the complex helicase activity. The existence of maternal and zygotic forms of mcm3 and mcm6 suggests that specific forms of mcm2-7 complexes may be used during different stages of development. In Xenopus tropicalis (Western clawed frog), this protein is Zygotic DNA replication licensing factor mcm3 (zmcm3).